The following is a 101-amino-acid chain: Large ribosomal subunit protein uL23 (101 aa).

The protein belongs to the universal ribosomal protein uL23 family. In terms of assembly, part of the 50S ribosomal subunit. Contacts protein L29, and trigger factor when it is bound to the ribosome.

Functionally, one of the early assembly proteins it binds 23S rRNA. One of the proteins that surrounds the polypeptide exit tunnel on the outside of the ribosome. Forms the main docking site for trigger factor binding to the ribosome. The polypeptide is Large ribosomal subunit protein uL23 (Rhodococcus erythropolis (strain PR4 / NBRC 100887)).